The chain runs to 282 residues: 2-dehydro-3-deoxyphosphooctonate aldolase (282 aa).

It belongs to the KdsA family.

The protein localises to the cytoplasm. It carries out the reaction D-arabinose 5-phosphate + phosphoenolpyruvate + H2O = 3-deoxy-alpha-D-manno-2-octulosonate-8-phosphate + phosphate. The protein operates within carbohydrate biosynthesis; 3-deoxy-D-manno-octulosonate biosynthesis; 3-deoxy-D-manno-octulosonate from D-ribulose 5-phosphate: step 2/3. It participates in bacterial outer membrane biogenesis; lipopolysaccharide biosynthesis. The polypeptide is 2-dehydro-3-deoxyphosphooctonate aldolase (Shewanella baltica (strain OS185)).